A 466-amino-acid chain; its full sequence is ATP synthase subunit beta (466 aa).

155-162 (GGAGVGKT) lines the ATP pocket.

Belongs to the ATPase alpha/beta chains family. F-type ATPases have 2 components, CF(1) - the catalytic core - and CF(0) - the membrane proton channel. CF(1) has five subunits: alpha(3), beta(3), gamma(1), delta(1), epsilon(1). CF(0) has three main subunits: a(1), b(2) and c(9-12). The alpha and beta chains form an alternating ring which encloses part of the gamma chain. CF(1) is attached to CF(0) by a central stalk formed by the gamma and epsilon chains, while a peripheral stalk is formed by the delta and b chains.

Its subcellular location is the cell inner membrane. The catalysed reaction is ATP + H2O + 4 H(+)(in) = ADP + phosphate + 5 H(+)(out). In terms of biological role, produces ATP from ADP in the presence of a proton gradient across the membrane. The catalytic sites are hosted primarily by the beta subunits. The polypeptide is ATP synthase subunit beta (Bordetella petrii (strain ATCC BAA-461 / DSM 12804 / CCUG 43448)).